We begin with the raw amino-acid sequence, 552 residues long: MQQFFRPVIQDALRSAGIETGQPVQIEKPASAKFGHFSTNIAFLSAKELGKNPRTLAQELIGHLRFPSGSIEKTEVAGPGFINFFLTPPFIMDSLGEVLRQGEAFGRGTSGNGEKAIVEYVSANPTGPLTIGRGRGGVLGDCIANLFEAEGYSVTREYYFNDAGRQMQILGESVRFRYLERCGRKVDFPDTHYQGGYIGDIADRIYQEQGDSLADAEGTGEFKSTAEAIIFSSIKKTLERLGIRHDSFFNEHTLYTPDENGATRNSRVIDALRQKGFIDEYEGATWFLTTKLGQEKNKVLVKSTGEPSYRLPDIAYHLTKYDRGFGVIVNVFGADHIDEYPDVIEALKILGHDTSRIRIAINQFVTTTVDGETVKMSTRKGNADLLDDLIDDVGADATRLFFIMRSKDSHLNFDVDLARKQSKDNPVFYLQYAHARICSLLRMAWSENGFNPEKLPDLALLKTLSSPEELQLALALLDFPDMVRSALRLLEPQKMVDYMHSIAELYHRFYQECPILKAEADTANARLLLSLATRQVLQNGFRILGISAPESM.

Positions 123–133 (ANPTGPLTIGR) match the 'HIGH' region motif.

Belongs to the class-I aminoacyl-tRNA synthetase family. As to quaternary structure, monomer.

The protein localises to the cytoplasm. The catalysed reaction is tRNA(Arg) + L-arginine + ATP = L-arginyl-tRNA(Arg) + AMP + diphosphate. In Chlorobium phaeovibrioides (strain DSM 265 / 1930) (Prosthecochloris vibrioformis (strain DSM 265)), this protein is Arginine--tRNA ligase.